A 333-amino-acid polypeptide reads, in one-letter code: Adenosine deaminase (333 aa).

2 residues coordinate Zn(2+): His12 and His14. His14, Asp16, and Gly170 together coordinate substrate. His197 serves as a coordination point for Zn(2+). Residue Glu200 is the Proton donor of the active site. Position 278 (Asp278) interacts with Zn(2+). Asp279 lines the substrate pocket.

Belongs to the metallo-dependent hydrolases superfamily. Adenosine and AMP deaminases family. Adenosine deaminase subfamily. Zn(2+) is required as a cofactor.

The enzyme catalyses adenosine + H2O + H(+) = inosine + NH4(+). It catalyses the reaction 2'-deoxyadenosine + H2O + H(+) = 2'-deoxyinosine + NH4(+). Catalyzes the hydrolytic deamination of adenosine and 2-deoxyadenosine. In Salmonella paratyphi C (strain RKS4594), this protein is Adenosine deaminase.